A 165-amino-acid chain; its full sequence is Transcriptional repressor NrdR (165 aa).

A zinc finger lies at 3–34 (CPFCRNPDSRVVDSRMADDGSAIRRRRQCPEC). In terms of domain architecture, ATP-cone spans 46–136 (LTVIKRSGVG…VYQAFESLED (91 aa)).

This sequence belongs to the NrdR family. Zn(2+) is required as a cofactor.

Its function is as follows. Negatively regulates transcription of bacterial ribonucleotide reductase nrd genes and operons by binding to NrdR-boxes. In Arthrobacter sp. (strain FB24), this protein is Transcriptional repressor NrdR.